A 419-amino-acid chain; its full sequence is Gamma-glutamyl phosphate reductase (419 aa).

It belongs to the gamma-glutamyl phosphate reductase family.

The protein localises to the cytoplasm. It carries out the reaction L-glutamate 5-semialdehyde + phosphate + NADP(+) = L-glutamyl 5-phosphate + NADPH + H(+). Its pathway is amino-acid biosynthesis; L-proline biosynthesis; L-glutamate 5-semialdehyde from L-glutamate: step 2/2. Its function is as follows. Catalyzes the NADPH-dependent reduction of L-glutamate 5-phosphate into L-glutamate 5-semialdehyde and phosphate. The product spontaneously undergoes cyclization to form 1-pyrroline-5-carboxylate. The polypeptide is Gamma-glutamyl phosphate reductase (Bordetella avium (strain 197N)).